We begin with the raw amino-acid sequence, 493 residues long: uncharacterized protein (493 aa).

8–37 (DFLVVGGGTCGCVVAARLSEDPSATVMLLE) lines the FAD pocket. The active-site Proton acceptor is the H429.

The protein belongs to the GMC oxidoreductase family. The cofactor is FAD.

This is an uncharacterized protein from Rhodococcus erythropolis (Arthrobacter picolinophilus).